The primary structure comprises 521 residues: ATP synthase subunit beta (521 aa).

Low complexity-rich tracts occupy residues 1-21 (MAKAATPKTTAAAEAKPAAKA) and 28-42 (PKTTAAAKPAATKSG). Residues 1–42 (MAKAATPKTTAAAEAKPAAKAPAKKAAPKTTAAAKPAATKSG) form a disordered region. 199–206 (GGAGVGKT) contributes to the ATP binding site.

This sequence belongs to the ATPase alpha/beta chains family. F-type ATPases have 2 components, CF(1) - the catalytic core - and CF(0) - the membrane proton channel. CF(1) has five subunits: alpha(3), beta(3), gamma(1), delta(1), epsilon(1). CF(0) has three main subunits: a(1), b(2) and c(9-12). The alpha and beta chains form an alternating ring which encloses part of the gamma chain. CF(1) is attached to CF(0) by a central stalk formed by the gamma and epsilon chains, while a peripheral stalk is formed by the delta and b chains.

The protein resides in the cell inner membrane. The catalysed reaction is ATP + H2O + 4 H(+)(in) = ADP + phosphate + 5 H(+)(out). In terms of biological role, produces ATP from ADP in the presence of a proton gradient across the membrane. The catalytic sites are hosted primarily by the beta subunits. In Brucella abortus (strain 2308), this protein is ATP synthase subunit beta.